Here is a 270-residue protein sequence, read N- to C-terminus: Undecaprenyl-diphosphatase 1 (270 aa).

Transmembrane regions (helical) follow at residues 79 to 99 (NLLL…LLFS), 105 to 125 (VLFN…IILW), 155 to 175 (LALI…LFLG), 182 to 202 (TEFS…YSLI), 215 to 235 (VFAV…RALL), and 242 to 262 (SFAV…GTWW).

Belongs to the UppP family.

The protein resides in the cell inner membrane. It catalyses the reaction di-trans,octa-cis-undecaprenyl diphosphate + H2O = di-trans,octa-cis-undecaprenyl phosphate + phosphate + H(+). Functionally, catalyzes the dephosphorylation of undecaprenyl diphosphate (UPP). Confers resistance to bacitracin. This Chromobacterium violaceum (strain ATCC 12472 / DSM 30191 / JCM 1249 / CCUG 213 / NBRC 12614 / NCIMB 9131 / NCTC 9757 / MK) protein is Undecaprenyl-diphosphatase 1.